A 732-amino-acid polypeptide reads, in one-letter code: Catalase-peroxidase (732 aa).

A compositionally biased stretch (basic and acidic residues) spans 1 to 11 (MDAKTDDKDGG). The tract at residues 1–24 (MDAKTDDKDGGKCPFPHGGGRGRR) is disordered. Positions 97-219 (WHSAGTYRTT…LGAVQMGLIY (123 aa)) form a cross-link, tryptophyl-tyrosyl-methioninium (Trp-Tyr) (with M-245). The active-site Proton acceptor is the His98. The segment at residues 219-245 (YVNPEGPNGNPDPVAAAKDIRETFARM) is a cross-link (tryptophyl-tyrosyl-methioninium (Tyr-Met) (with W-97)). Heme b is bound at residue His260.

This sequence belongs to the peroxidase family. Peroxidase/catalase subfamily. As to quaternary structure, homodimer or homotetramer. The cofactor is heme b. Formation of the three residue Trp-Tyr-Met cross-link is important for the catalase, but not the peroxidase activity of the enzyme.

It carries out the reaction H2O2 + AH2 = A + 2 H2O. The enzyme catalyses 2 H2O2 = O2 + 2 H2O. Functionally, bifunctional enzyme with both catalase and broad-spectrum peroxidase activity. The sequence is that of Catalase-peroxidase from Rhodopseudomonas palustris (strain HaA2).